We begin with the raw amino-acid sequence, 447 residues long: Trimethylamine monooxygenase (447 aa).

FAD-binding residues include S13, E38, Q40, L46, W47, and H63. NADP(+) is bound by residues W71 and N73. N73 and V126 together coordinate FAD. Y173, A205, S206, S208, and R229 together coordinate NADP(+). The FAD site is built by Q318 and T321. R413 contacts NADP(+).

The protein belongs to the FMO family. FAD is required as a cofactor.

It catalyses the reaction trimethylamine + NADPH + O2 = trimethylamine N-oxide + NADP(+) + H2O. In terms of biological role, catalyzes the oxidation of trimethylamine (TMA) to produce trimethylamine N-oxide (TMAO). TMA is the best substrate, but the enzyme can also oxidize methimazole, indole and dimethylamine (DMA). This is Trimethylamine monooxygenase from Roseovarius nubinhibens (strain ATCC BAA-591 / DSM 15170 / ISM).